The sequence spans 113 residues: U11-theraphotoxin-Hhn1f (113 aa).

An N-terminal signal peptide occupies residues 1 to 21; sequence MNTVRVTFLLVFVLAVSLGQA. A propeptide spanning residues 22-74 is cleaved from the precursor; the sequence is DKDENRMEMQEKTEQGKSYLDFAENLLLQKLEELEAKLLEEDSEESRNSRQKR. The disordered stretch occupies residues 61–83; sequence EEDSEESRNSRQKRCIGEGVPCD. 3 disulfide bridges follow: cysteine 75/cysteine 90, cysteine 82/cysteine 95, and cysteine 89/cysteine 110.

It belongs to the neurotoxin 14 (magi-1) family. 01 (HNTX-16) subfamily. In terms of tissue distribution, expressed by the venom gland.

The protein localises to the secreted. Probable ion channel inhibitor. This chain is U11-theraphotoxin-Hhn1f, found in Cyriopagopus hainanus (Chinese bird spider).